The chain runs to 89 residues: Acyl carrier protein MbtL (89 aa).

Residues 7–82 (ESVSAALTEI…DLEAAIQAKV (76 aa)) enclose the Carrier domain. Ser-42 carries the O-(pantetheine 4'-phosphoryl)serine modification.

In terms of processing, 4'-phosphopantetheine is transferred from CoA to a specific serine of apo-ACP, leading to the activated holo-ACP form.

The protein resides in the cytoplasm. It participates in siderophore biosynthesis; mycobactin biosynthesis. Its function is as follows. Acyl carrier protein involved in the formation of acyl-S-ACP intermediates within the mycobactin biosynthesis process. The sequence is that of Acyl carrier protein MbtL (mbtL) from Mycobacterium sp. (strain MCS).